We begin with the raw amino-acid sequence, 342 residues long: Ribosomal RNA small subunit methyltransferase C (342 aa).

The protein belongs to the methyltransferase superfamily. RsmC family. As to quaternary structure, monomer.

Its subcellular location is the cytoplasm. The catalysed reaction is guanosine(1207) in 16S rRNA + S-adenosyl-L-methionine = N(2)-methylguanosine(1207) in 16S rRNA + S-adenosyl-L-homocysteine + H(+). Its function is as follows. Specifically methylates the guanine in position 1207 of 16S rRNA in the 30S particle. The polypeptide is Ribosomal RNA small subunit methyltransferase C (Salmonella newport (strain SL254)).